Reading from the N-terminus, the 151-residue chain is 6,7-dimethyl-8-ribityllumazine synthase (151 aa).

5-amino-6-(D-ribitylamino)uracil is bound by residues Phe-15, 47–49 (TFE), and 71–73 (AVI). 76 to 77 (ET) is a (2S)-2-hydroxy-3-oxobutyl phosphate binding site. His-79 functions as the Proton donor in the catalytic mechanism. Leu-104 contacts 5-amino-6-(D-ribitylamino)uracil. (2S)-2-hydroxy-3-oxobutyl phosphate is bound at residue Arg-119.

It belongs to the DMRL synthase family.

The catalysed reaction is (2S)-2-hydroxy-3-oxobutyl phosphate + 5-amino-6-(D-ribitylamino)uracil = 6,7-dimethyl-8-(1-D-ribityl)lumazine + phosphate + 2 H2O + H(+). It functions in the pathway cofactor biosynthesis; riboflavin biosynthesis; riboflavin from 2-hydroxy-3-oxobutyl phosphate and 5-amino-6-(D-ribitylamino)uracil: step 1/2. Catalyzes the formation of 6,7-dimethyl-8-ribityllumazine by condensation of 5-amino-6-(D-ribitylamino)uracil with 3,4-dihydroxy-2-butanone 4-phosphate. This is the penultimate step in the biosynthesis of riboflavin. This Metallosphaera sedula (strain ATCC 51363 / DSM 5348 / JCM 9185 / NBRC 15509 / TH2) protein is 6,7-dimethyl-8-ribityllumazine synthase.